We begin with the raw amino-acid sequence, 569 residues long: Ferredoxin--nitrite reductase, chloroplastic (569 aa).

The transit peptide at 1–4 directs the protein to the chloroplast; it reads IPGR. The disordered stretch occupies residues 1–28; sequence IPGRTGRARAAVSVPPPAGEQVPTERLE. The [4Fe-4S] cluster site is built by C447, C453, C488, and C492. C492 lines the siroheme pocket.

Belongs to the nitrite and sulfite reductase 4Fe-4S domain family. As to quaternary structure, monomer. It depends on siroheme as a cofactor. [4Fe-4S] cluster is required as a cofactor.

The protein resides in the plastid. It localises to the chloroplast. It catalyses the reaction 6 oxidized [2Fe-2S]-[ferredoxin] + NH4(+) + 2 H2O = nitrite + 6 reduced [2Fe-2S]-[ferredoxin] + 8 H(+). It functions in the pathway nitrogen metabolism; nitrate reduction (assimilation). This chain is Ferredoxin--nitrite reductase, chloroplastic (NIR), found in Zea mays (Maize).